We begin with the raw amino-acid sequence, 277 residues long: Shikimate dehydrogenase (NADP(+)) (277 aa).

Shikimate is bound by residues 15–17 (SLS) and Thr-62. Lys-66 serves as the catalytic Proton acceptor. Residues Asn-87 and Asp-102 each coordinate shikimate. NADP(+) contacts are provided by residues 127 to 131 (GAGGA), 151 to 156 (NRTVDK), and Ile-219. Shikimate is bound at residue Tyr-221. Gly-242 is a binding site for NADP(+).

The protein belongs to the shikimate dehydrogenase family. As to quaternary structure, homodimer.

The enzyme catalyses shikimate + NADP(+) = 3-dehydroshikimate + NADPH + H(+). Its pathway is metabolic intermediate biosynthesis; chorismate biosynthesis; chorismate from D-erythrose 4-phosphate and phosphoenolpyruvate: step 4/7. Its function is as follows. Involved in the biosynthesis of the chorismate, which leads to the biosynthesis of aromatic amino acids. Catalyzes the reversible NADPH linked reduction of 3-dehydroshikimate (DHSA) to yield shikimate (SA). The protein is Shikimate dehydrogenase (NADP(+)) of Bacillus cereus (strain AH187).